Consider the following 346-residue polypeptide: Histidinol-phosphate aminotransferase (346 aa).

Position 209 is an N6-(pyridoxal phosphate)lysine (lysine 209).

Belongs to the class-II pyridoxal-phosphate-dependent aminotransferase family. Histidinol-phosphate aminotransferase subfamily. Homodimer. Pyridoxal 5'-phosphate serves as cofactor.

The catalysed reaction is L-histidinol phosphate + 2-oxoglutarate = 3-(imidazol-4-yl)-2-oxopropyl phosphate + L-glutamate. Its pathway is amino-acid biosynthesis; L-histidine biosynthesis; L-histidine from 5-phospho-alpha-D-ribose 1-diphosphate: step 7/9. This chain is Histidinol-phosphate aminotransferase, found in Vibrio campbellii (strain ATCC BAA-1116).